Consider the following 249-residue polypeptide: tRNA (guanine-N(1)-)-methyltransferase (249 aa).

Residues G117 and 137-142 each bind S-adenosyl-L-methionine; that span reads LGDFVL.

It belongs to the RNA methyltransferase TrmD family. Homodimer.

Its subcellular location is the cytoplasm. The catalysed reaction is guanosine(37) in tRNA + S-adenosyl-L-methionine = N(1)-methylguanosine(37) in tRNA + S-adenosyl-L-homocysteine + H(+). Functionally, specifically methylates guanosine-37 in various tRNAs. In Janthinobacterium sp. (strain Marseille) (Minibacterium massiliensis), this protein is tRNA (guanine-N(1)-)-methyltransferase.